A 494-amino-acid chain; its full sequence is MFYVQKELASHEAVIVALFEEEQTSSFVQELDKAFEGQLQVLLEEKELSTKKKAISKVHSLGKTEVKRYYFVGLGKKESYTTETLRSALGKTFKTLQAAKVQDAAILLDSFVTKKLDAIDVAHIAAEVQGLGTYELQTYKSDKKDRVELEKFTAITAEDAQEIEAALTVGYVHGRATNSARTLVNMPPNVLTATKLAEYAVELAEKYDMDYKVLEKEEMEELGMGALLAVNQGSVEPPKMIALIYKGKEEWTDVIGFVGKGITYDTGGYSLKPREGMVGMKGDMGGAAAVLGAMEIIGELRPEQNVIAVIPSTDNVVSGTAFKPDDVITSMSGKTIEVLNTDAEGRLALADGITYAKKLGANYLIDVATLTGGVIVALGNHTTGAMTNNEELFEQVLEASMETDESIWQLPIFDRDKERVRNSKFADLNNSPGREGHAVMAGTFLSEFAEDTPWVHLDIAGTSESSGAHDLGPAGATGAMVRTLATLVERFGEE.

Lysine 260 and aspartate 265 together coordinate Mn(2+). Lysine 272 is a catalytic residue. Residues aspartate 283, aspartate 342, and glutamate 344 each contribute to the Mn(2+) site. Arginine 346 is a catalytic residue.

Belongs to the peptidase M17 family. Requires Mn(2+) as cofactor.

The protein localises to the cytoplasm. The enzyme catalyses Release of an N-terminal amino acid, Xaa-|-Yaa-, in which Xaa is preferably Leu, but may be other amino acids including Pro although not Arg or Lys, and Yaa may be Pro. Amino acid amides and methyl esters are also readily hydrolyzed, but rates on arylamides are exceedingly low.. The catalysed reaction is Release of an N-terminal amino acid, preferentially leucine, but not glutamic or aspartic acids.. Its function is as follows. Presumably involved in the processing and regular turnover of intracellular proteins. Catalyzes the removal of unsubstituted N-terminal amino acids from various peptides. This chain is Probable cytosol aminopeptidase, found in Bacillus cereus (strain AH187).